We begin with the raw amino-acid sequence, 127 residues long: Basic leucine zipper transcriptional factor ATF-like 3 (127 aa).

The tract at residues Met-1–Gln-72 is disordered. Residues Ser-2 and Ser-31 each carry the phosphoserine modification. Residues Asp-35–His-98 form the bZIP domain. Positions Arg-37 to Lys-62 are basic motif. The segment covering Gln-58–Tyr-67 has biased composition (basic and acidic residues). The segment at Leu-63–Leu-91 is leucine-zipper.

The protein belongs to the bZIP family. As to quaternary structure, heterodimer; heterodimerizes with JUN family proteins. Interacts with JUN.

The protein localises to the nucleus. Functionally, AP-1 family transcription factor that controls the differentiation of CD8(+) thymic conventional dendritic cells in the immune system. Required for development of CD8-alpha(+) classical dendritic cells (cDCs) and related CD103(+) dendritic cells that cross-present antigens to CD8 T-cells and produce interleukin-12 (IL12) in response to pathogens. Acts via the formation of a heterodimer with JUN family proteins that recognizes and binds DNA sequence 5'-TGA[CG]TCA-3' and regulates expression of target genes. This is Basic leucine zipper transcriptional factor ATF-like 3 (BATF3) from Homo sapiens (Human).